Here is a 248-residue protein sequence, read N- to C-terminus: MEIVIVIPARLDSTRLQRKMLADIEGEPLIVRTCQNAMRAECTDRVVVATDSPEIAEVLRKVHVEVVMTSRHARCGSERIAEAAESLEGDLFINLQGDEPLIDPATIDLVAAPYLRGERPDCTTLVFPVPAAETALIDDPHIVKAVIDSNGYALYFSRSPIPCRRGANLSTTFYRHIGIYAFQREVLQKFAGLEPSMLEKEESLEQLRLLENGFRIQCVETTVDSPGVNTPEELEFVRRIFREDLPSL.

The protein belongs to the KdsB family.

It is found in the cytoplasm. It catalyses the reaction 3-deoxy-alpha-D-manno-oct-2-ulosonate + CTP = CMP-3-deoxy-beta-D-manno-octulosonate + diphosphate. Its pathway is nucleotide-sugar biosynthesis; CMP-3-deoxy-D-manno-octulosonate biosynthesis; CMP-3-deoxy-D-manno-octulosonate from 3-deoxy-D-manno-octulosonate and CTP: step 1/1. It participates in bacterial outer membrane biogenesis; lipopolysaccharide biosynthesis. Functionally, activates KDO (a required 8-carbon sugar) for incorporation into bacterial lipopolysaccharide in Gram-negative bacteria. This is 3-deoxy-manno-octulosonate cytidylyltransferase from Chlorobium phaeobacteroides (strain BS1).